The chain runs to 335 residues: Protein-arginine kinase (335 aa).

A Phosphagen kinase C-terminal domain is found at 21-244; it reads VIISSRIRLA…NQIINEEKQI (224 aa). ATP contacts are provided by residues 24 to 28, His82, Arg115, 166 to 170, and 197 to 202; these read SSRIR, RASVM, and RGIYGE.

The protein belongs to the ATP:guanido phosphotransferase family.

The enzyme catalyses L-arginyl-[protein] + ATP = N(omega)-phospho-L-arginyl-[protein] + ADP + H(+). Its function is as follows. Catalyzes the specific phosphorylation of arginine residues in proteins. In Staphylococcus epidermidis (strain ATCC 12228 / FDA PCI 1200), this protein is Protein-arginine kinase.